Consider the following 433-residue polypeptide: Malate synthase (433 aa).

Position 16–17 (16–17) interacts with acetyl-CoA; sequence TS. Position 52 (Asp-52) interacts with Mg(2+). Arg-84 is a binding site for acetyl-CoA. Residues Arg-84, Glu-158, and 191–192 each bind glyoxylate; that span reads VD. The Mg(2+) site is built by Glu-158 and Asp-192. Arg-236 and Leu-259 together coordinate acetyl-CoA. The active-site Proton acceptor is the Asp-388.

It belongs to the HpcH/HpaI aldolase family. Homotrimer and homohexamer in equilibrium. Requires Mg(2+) as cofactor.

Its subcellular location is the cytoplasm. It catalyses the reaction glyoxylate + acetyl-CoA + H2O = (S)-malate + CoA + H(+). Its pathway is carbohydrate metabolism; glyoxylate cycle; (S)-malate from isocitrate: step 2/2. Involved in the glyoxylate cycle which synthesizes precursors for carbohydrates from C2 compounds such as acetate. Catalyzes the Claisen condensation between acetyl-coenzyme A (acetyl-CoA) and glyoxylate to form the malyl-CoA intermediate that is subsequently hydrolyzed to produce malate and CoA. The chain is Malate synthase (aceB) from Haloferax volcanii (strain ATCC 29605 / DSM 3757 / JCM 8879 / NBRC 14742 / NCIMB 2012 / VKM B-1768 / DS2) (Halobacterium volcanii).